The sequence spans 161 residues: UPF0262 protein Rru_A2770 (161 aa).

Belongs to the UPF0262 family.

The polypeptide is UPF0262 protein Rru_A2770 (Rhodospirillum rubrum (strain ATCC 11170 / ATH 1.1.1 / DSM 467 / LMG 4362 / NCIMB 8255 / S1)).